The chain runs to 161 residues: Pleiotrophin-A (161 aa).

The first 23 residues, 1 to 23 (MRHQHGLFMLALLAFLFVITVLG), serve as a signal peptide directing secretion. Intrachain disulfides connect Cys41-Cys70, Cys49-Cys79, Cys56-Cys83, Cys93-Cys125, and Cys103-Cys135. Chondroitin sulfate binding stretches follow at residues 86–93 (KKQFGAEC) and 117–125 (KRALHNAEC). Residues 136 to 161 (GKVTKPKLQESKKKKKEGKNKEKLLD) form a disordered region. The tract at residues 141-161 (PKLQESKKKKKEGKNKEKLLD) is chondroitin sulfate A binding.

Belongs to the pleiotrophin family. In terms of tissue distribution, expressed in high levels in brain and eye. Lower levels in bone. In the tailbud embryo stage, it is expressed exclusively in the central nervous system, especially in the hind region of the brain.

The protein resides in the secreted. Its function is as follows. Secreted growth factor that mediates its signal through cell-surface proteoglycan and non-proteoglycan receptors. Binds cell-surface proteoglycan receptor via their chondroitin sulfate (CS) groups. Thereby regulates many processes like cell proliferation, cell survival, cell growth, cell differentiation and cell migration. Has antibacterial activity against both Gram-positive and Gram-negative bacteria. This chain is Pleiotrophin-A (ptn-a), found in Xenopus laevis (African clawed frog).